The following is a 467-amino-acid chain: Ammonium transporter Rh type C (467 aa).

Topologically, residues 1 to 9 (MAWNTNLRW) are cytoplasmic. The chain crosses the membrane as a helical span at residues 10 to 30 (RLPLLCLVLEVAMVVLFGLFV). Topologically, residues 31-61 (RYSPDADSSWSNEKRKGNITSDLENEFYYRY) are extracellular. N48 carries an N-linked (GlcNAc...) asparagine glycan. Residues 62–82 (PSFQDVHVMVFLGFGFLMTFL) traverse the membrane as a helical segment. Topologically, residues 83–86 (QRYG) are cytoplasmic. A helical transmembrane segment spans residues 87–107 (YCALGFNFLLAALGVQWALLM). Residues 108–131 (QGWFQYTKDRLILLGIKNLIDADS) are Extracellular-facing. Transmembrane regions (helical) follow at residues 132–152 (CVAS…PVQM) and 153–173 (LLMT…LLHV). Residues 174-179 (LEVKDA) lie on the Extracellular side of the membrane. Residues 180–200 (GGSITIHIFGAYFGLTVTWIL) traverse the membrane as a helical segment. The Cytoplasmic segment spans residues 201–219 (YRHNLDHSRERQSSVYHSN). Residues 220-240 (LFAMIGTLFLWIYWPSFNSAM) traverse the membrane as a helical segment. The Extracellular portion of the chain corresponds to 241 to 251 (SNYGDAQHRAA). Residues 252–272 (INTYCSLAASVLTSVAMSSVL) form a helical membrane-spanning segment. Residues 273 to 282 (HKKGKLDMVH) lie on the Cytoplasmic side of the membrane. A helical membrane pass occupies residues 283-303 (IQNATLAGGVGVGTAAEMMLM). A topological domain (extracellular) is located at residue P304. Residues 305 to 325 (YGALIVGFICGAVSTLGFVYL) traverse the membrane as a helical segment. Topologically, residues 326 to 343 (TPFLESRLRIQDTCGIHN) are cytoplasmic. The helical transmembrane segment at 344–364 (LHGIPGLIGAIVGAVTAAYAS) threads the bilayer. At 365–391 (PDGDRGFVYPFGFHNEKDEKVQGRFQA) the chain is on the extracellular side. A helical membrane pass occupies residues 392–412 (FGLLLTLAIAMVGGTIMGLIL). The Cytoplasmic portion of the chain corresponds to 413 to 467 (KLPFWGQAMDEDCFDDSIYWEMHEEKSSSPEDHTHKPSVPTEPVEQPTSSATLAP). Residues 436 to 447 (EEKSSSPEDHTH) are compositionally biased toward basic and acidic residues. A disordered region spans residues 436 to 467 (EEKSSSPEDHTHKPSVPTEPVEQPTSSATLAP). Over residues 458-467 (QPTSSATLAP) the composition is skewed to polar residues.

It belongs to the ammonium transporter (TC 2.A.49) family. Rh subfamily. As to quaternary structure, homotrimer. N-glycosylated.

It is found in the cell membrane. The protein localises to the apical cell membrane. It catalyses the reaction NH4(+)(in) = NH4(+)(out). The enzyme catalyses methylamine(out) = methylamine(in). It carries out the reaction CO2(out) = CO2(in). Its function is as follows. Ammonium transporter involved in the maintenance of acid-base homeostasis. Transports ammonium and its related derivative methylammonium across the plasma membrane of epithelial cells likely contributing to renal transepithelial ammonia transport and ammonia metabolism. Postulated to primarily mediate an electroneutral bidirectional transport of NH3 ammonia species according to a mechanism that implies interaction of an NH4(+) ion with acidic residues of the pore entry followed by dissociation of NH4(+) into NH3 and H(+). As a result NH3 transits through the central pore and is protonated on the extracellular side reforming NH4(+). May act as a CO2 channel providing for renal acid secretion. This chain is Ammonium transporter Rh type C (RHCG), found in Oryctolagus cuniculus (Rabbit).